A 604-amino-acid polypeptide reads, in one-letter code: Prostaglandin G/H synthase 2 (604 aa).

The first 17 residues, 1-17 (MLARALLLCAALALGQA), serve as a signal peptide directing secretion. The EGF-like domain maps to 18–55 (ANPCCSNPCQNRGECLSVGFDRYKCDCTRTGYYGENCT). 4 cysteine pairs are disulfide-bonded: Cys-21/Cys-32, Cys-22/Cys-145, Cys-26/Cys-42, and Cys-44/Cys-54. N-linked (GlcNAc...) asparagine glycosylation is present at Asn-53. Substrate is bound at residue Arg-106. The N-linked (GlcNAc...) asparagine glycan is linked to Asn-130. His-193 functions as the Proton acceptor in the catalytic mechanism. Residue Tyr-341 participates in substrate binding. Residue Tyr-371 is the For cyclooxygenase activity of the active site. His-374 provides a ligand contact to heme b. An N-linked (GlcNAc...) asparagine glycan is attached at Asn-396. Position 526 is an S-nitrosocysteine (Cys-526). Cys-555 and Cys-561 are oxidised to a cystine. Residue Asn-580 is glycosylated (N-linked (GlcNAc...) asparagine).

It belongs to the prostaglandin G/H synthase family. As to quaternary structure, homodimer. It depends on heme b as a cofactor. S-nitrosylation by NOS2 (iNOS) activates enzyme activity. S-nitrosylation may take place on different Cys residues in addition to Cys-526.

The protein resides in the microsome membrane. It is found in the endoplasmic reticulum membrane. Its subcellular location is the nucleus inner membrane. It localises to the nucleus outer membrane. The catalysed reaction is (5Z,8Z,11Z,14Z)-eicosatetraenoate + AH2 + 2 O2 = prostaglandin H2 + A + H2O. It carries out the reaction (5Z,8Z,11Z,14Z)-eicosatetraenoate + 2 O2 = prostaglandin G2. It catalyses the reaction prostaglandin G2 + AH2 = prostaglandin H2 + A + H2O. The enzyme catalyses (5Z,8Z,11Z,14Z,17Z)-eicosapentaenoate + 2 O2 = prostaglandin G3. The catalysed reaction is prostaglandin G3 + AH2 = prostaglandin H3 + A + H2O. It carries out the reaction (8Z,11Z,14Z)-eicosatrienoate + 2 O2 = prostaglandin G1. It catalyses the reaction prostaglandin G1 + AH2 = prostaglandin H1 + A + H2O. The enzyme catalyses 2-(5Z,8Z,11Z,14Z)-eicosatetraenoyl-sn-glycero-3-phosphoethanolamine + 2 O2 = 2-(prostaglandin G2)-sn-glycero-3-phosphoethanolamine. The catalysed reaction is 2-(prostaglandin G2)-sn-glycero-3-phosphoethanolamine + AH2 = 2-(prostaglandin H2)-sn-glycero-3-phosphoethanolamine + A + H2O. It carries out the reaction 2-(5Z,8Z,11Z,14Z)-eicosatetraenoyl-sn-glycero-3-phosphocholine + 2 O2 = 2-(prostaglandin G2)-sn-glycero-3-phosphocholine. It catalyses the reaction 2-(prostaglandin G2)-sn-glycero-3-phosphocholine + AH2 = 2-(prostaglandin H2)-sn-glycero-3-phosphocholine + A + H2O. The enzyme catalyses (15S)-hydroperoxy-(5Z,8Z,11Z,13E)-eicosatetraenoate + AH2 = (15S)-hydroxy-(5Z,8Z,11Z,13E)-eicosatetraenoate + A + H2O. The catalysed reaction is 2-(5Z,8Z,11Z,14Z)-eicosatetraenoyl-sn-glycero-3-phosphocholine + AH2 + O2 = 2-[(15S)-hydroxy-(5Z,8Z,11Z,13E)-eicosatetraenoyl]-sn-glycero-3-phosphocholine + A + H2O. It carries out the reaction 2-(5Z,8Z,11Z,14Z)-eicosatetraenoyl-sn-glycero-3-phosphocholine + AH2 + O2 = 2-[(15R)-hydroxy-(5Z,8Z,11Z,13E)-eicosatetraenoyl]-sn-glycero-3-phosphocholine + A + H2O. It catalyses the reaction 2-(5Z,8Z,11Z,14Z)-eicosatetraenoyl-sn-glycero-3-phosphocholine + AH2 + O2 = 2-[(11R)-hydroxy-(5Z,8Z,12E,14Z)-eicosatetraenoyl]-sn-glycero-3-phosphocholine + A + H2O. The enzyme catalyses (9Z,12Z)-octadecadienoate + AH2 + O2 = 9-hydroxy-(10E,12Z)-octadecadienoate + A + H2O. The catalysed reaction is (9Z,12Z)-octadecadienoate + AH2 + O2 = 13-hydroxy-(9Z,11E)-octadecadienoate + A + H2O. It carries out the reaction (5Z,8Z,11Z,14Z)-eicosatetraenoate + AH2 + O2 = (15R)-hydroxy-(5Z,8Z,11Z,13E)-eicosatetraenoate + A + H2O. It catalyses the reaction (5Z,8Z,11Z,14Z)-eicosatetraenoate + AH2 + O2 = (11R)-hydroxy-(5Z,8Z,12E,14Z)-eicosatetraenoate + A + H2O. The enzyme catalyses (5Z,8Z,11Z,14Z,17Z)-eicosapentaenoate + AH2 + O2 = (11R)-hydroxy-(5Z,8Z,12E,14Z,17Z)-eicosapentaenoate + A + H2O. The catalysed reaction is (5Z,8Z,11Z,14Z,17Z)-eicosapentaenoate + AH2 + O2 = (18S)-hydroxy-(5Z,8Z,11Z,14Z,16E)-eicosapentaenoate + A + H2O. It carries out the reaction (5Z,8Z,11Z,14Z,17Z)-eicosapentaenoate + AH2 + O2 = (18R)-hydroxy-(5Z,8Z,11Z,14Z,16E)-eicosapentaenoate + A + H2O. It catalyses the reaction (5Z,8Z,11Z,14Z,17Z)-eicosapentaenoate + AH2 + O2 = (15R)-hydroxy-(5Z,8Z,11Z,13E,17Z)-eicosapentaenoate + A + H2O. The enzyme catalyses (5Z,8Z,11Z,14Z,17Z)-eicosapentaenoate + AH2 + O2 = (15S)-hydroxy-(5Z,8Z,11Z,13E,17Z)-eicosapentaenoate + A + H2O. The catalysed reaction is (7Z,10Z,13Z,16Z,19Z)-docosapentaenoate + AH2 + O2 = 13R-hydroxy-(7Z,10Z,14E,16Z,19Z)-docosapentaenoate + A + H2O. It carries out the reaction (4Z,7Z,10Z,13Z,16Z,19Z)-docosahexaenoate + AH2 + O2 = 13-hydroxy-(4Z,7Z,10Z,14E,16Z,19Z)-docosahexaenoate + A + H2O. It catalyses the reaction (5S)-hydroxy-(6E,8Z,11Z,14Z)-eicosatetraenoate + AH2 + O2 = (5S,15R)-dihydroxy-(6E,8Z,11Z,13E)-eicosatetraenoate + A + H2O. The enzyme catalyses (4Z,7Z,10Z,13Z,16Z,19Z)-docosahexaenoate + AH2 + O2 = 17R-hydroxy-(4Z,7Z,10Z,13Z,15E,19Z)-docosahexaenoate + A + H2O. The catalysed reaction is (5S)-hydroxy-(6E,8Z,11Z,14Z)-eicosatetraenoate + AH2 + O2 = (5S,15S)-dihydroxy-(6E,8Z,11Z,13E)-eicosatetraenoate + A + H2O. It carries out the reaction (5S)-hydroxy-(6E,8Z,11Z,14Z)-eicosatetraenoate + AH2 + O2 = (5S,11R)-dihydroxy-(6E,8Z,12E,14Z)-eicosatetraenoate + A + H2O. It catalyses the reaction 2-(5Z,8Z,11Z,14Z-eicosatetraenoyl)-glycerol + 2 O2 = 2-glyceryl-prostaglandin G2. The enzyme catalyses 2-glyceryl-prostaglandin G2 + AH2 = 2-glyceryl-prostaglandin H2 + A + H2O. The catalysed reaction is (5Z,8Z,11Z,14Z)-eicosatetraenoate + O2 = (15R)-hydroperoxy-(5Z,8Z,11Z,13E)-eicosatetraenoate. It carries out the reaction (5Z,8Z,11Z,14Z)-eicosatetraenoate + O2 = 11R-hydroperoxy-(5Z,8Z,12E,14Z)-eicosatetraenoate. It catalyses the reaction (9Z,12Z)-octadecadienoate + AH2 + O2 = (9R)-hydroxy-(10E,12Z)-octadecadienoate + A + H2O. The enzyme catalyses (9Z,12Z)-octadecadienoate + AH2 + O2 = (9S)-hydroxy-(10E,12Z)-octadecadienoate + A + H2O. The catalysed reaction is (9Z,12Z)-octadecadienoate + AH2 + O2 = (13S)-hydroxy-(9Z,11E)-octadecadienoate + A + H2O. It carries out the reaction (9Z,12Z)-octadecadienoate + AH2 + O2 = (13R)-hydroxy-(9Z,11E)-octadecadienoate + A + H2O. It functions in the pathway lipid metabolism; prostaglandin biosynthesis. Dual cyclooxygenase and peroxidase in the biosynthesis pathway of prostanoids, a class of C20 oxylipins mainly derived from arachidonate ((5Z,8Z,11Z,14Z)-eicosatetraenoate, AA, C20:4(n-6)), with a particular role in the inflammatory response. The cyclooxygenase activity oxygenates AA to the hydroperoxy endoperoxide prostaglandin G2 (PGG2), and the peroxidase activity reduces PGG2 to the hydroxy endoperoxide prostaglandin H2 (PGH2), the precursor of all 2-series prostaglandins and thromboxanes. This complex transformation is initiated by abstraction of hydrogen at carbon 13 (with S-stereochemistry), followed by insertion of molecular O2 to form the endoperoxide bridge between carbon 9 and 11 that defines prostaglandins. The insertion of a second molecule of O2 (bis-oxygenase activity) yields a hydroperoxy group in PGG2 that is then reduced to PGH2 by two electrons. Similarly catalyzes successive cyclooxygenation and peroxidation of dihomo-gamma-linoleate (DGLA, C20:3(n-6)) and eicosapentaenoate (EPA, C20:5(n-3)) to corresponding PGH1 and PGH3, the precursors of 1- and 3-series prostaglandins. In an alternative pathway of prostanoid biosynthesis, converts 2-arachidonoyl lysophopholipids to prostanoid lysophopholipids, which are then hydrolyzed by intracellular phospholipases to release free prostanoids. Metabolizes 2-arachidonoyl glycerol yielding the glyceryl ester of PGH2, a process that can contribute to pain response. Generates lipid mediators from n-3 and n-6 polyunsaturated fatty acids (PUFAs) via a lipoxygenase-type mechanism. Oxygenates PUFAs to hydroperoxy compounds and then reduces them to corresponding alcohols. Plays a role in the generation of resolution phase interaction products (resolvins) during both sterile and infectious inflammation. Metabolizes docosahexaenoate (DHA, C22:6(n-3)) to 17R-HDHA, a precursor of the D-series resolvins (RvDs). As a component of the biosynthetic pathway of E-series resolvins (RvEs), converts eicosapentaenoate (EPA, C20:5(n-3)) primarily to 18S-HEPE that is further metabolized by ALOX5 and LTA4H to generate 18S-RvE1 and 18S-RvE2. In vascular endothelial cells, converts docosapentaenoate (DPA, C22:5(n-3)) to 13R-HDPA, a precursor for 13-series resolvins (RvTs) shown to activate macrophage phagocytosis during bacterial infection. In activated leukocytes, contributes to oxygenation of hydroxyeicosatetraenoates (HETE) to diHETES (5,15-diHETE and 5,11-diHETE). Can also use linoleate (LA, (9Z,12Z)-octadecadienoate, C18:2(n-6)) as substrate and produce hydroxyoctadecadienoates (HODEs) in a regio- and stereospecific manner, being (9R)-HODE ((9R)-hydroxy-(10E,12Z)-octadecadienoate) and (13S)-HODE ((13S)-hydroxy-(9Z,11E)-octadecadienoate) its major products. During neuroinflammation, plays a role in neuronal secretion of specialized preresolving mediators (SPMs) 15R-lipoxin A4 that regulates phagocytic microglia. The protein is Prostaglandin G/H synthase 2 (PTGS2) of Cavia porcellus (Guinea pig).